The primary structure comprises 198 residues: Holliday junction branch migration complex subunit RuvA (198 aa).

The domain I stretch occupies residues 1-63 (MYDYIKGQLT…EDAHLLFGFH (63 aa)). The segment at 64-142 (TKDEKDVFLK…EAPQETGNTK (79 aa)) is domain II. The segment at 143–147 (ARSNK) is flexible linker. The interval 148-198 (AGNTQLDEAIEALLALGYKATELKKIRAFFEGTSETAEQYIKSALKLLMKG) is domain III.

This sequence belongs to the RuvA family. As to quaternary structure, homotetramer. Forms an RuvA(8)-RuvB(12)-Holliday junction (HJ) complex. HJ DNA is sandwiched between 2 RuvA tetramers; dsDNA enters through RuvA and exits via RuvB. An RuvB hexamer assembles on each DNA strand where it exits the tetramer. Each RuvB hexamer is contacted by two RuvA subunits (via domain III) on 2 adjacent RuvB subunits; this complex drives branch migration. In the full resolvosome a probable DNA-RuvA(4)-RuvB(12)-RuvC(2) complex forms which resolves the HJ.

The protein resides in the cytoplasm. Functionally, the RuvA-RuvB-RuvC complex processes Holliday junction (HJ) DNA during genetic recombination and DNA repair, while the RuvA-RuvB complex plays an important role in the rescue of blocked DNA replication forks via replication fork reversal (RFR). RuvA specifically binds to HJ cruciform DNA, conferring on it an open structure. The RuvB hexamer acts as an ATP-dependent pump, pulling dsDNA into and through the RuvAB complex. HJ branch migration allows RuvC to scan DNA until it finds its consensus sequence, where it cleaves and resolves the cruciform DNA. This is Holliday junction branch migration complex subunit RuvA from Streptococcus pyogenes serotype M18 (strain MGAS8232).